The primary structure comprises 239 residues: Orotidine 5'-phosphate decarboxylase (239 aa).

Residues Asp-15, Lys-36, 63 to 72, Thr-127, Arg-189, Gln-198, Gly-218, and Arg-219 each bind substrate; that span reads DLKFHDIPNT. The Proton donor role is filled by Lys-65.

This sequence belongs to the OMP decarboxylase family. Type 1 subfamily. In terms of assembly, homodimer.

It catalyses the reaction orotidine 5'-phosphate + H(+) = UMP + CO2. The protein operates within pyrimidine metabolism; UMP biosynthesis via de novo pathway; UMP from orotate: step 2/2. Functionally, catalyzes the decarboxylation of orotidine 5'-monophosphate (OMP) to uridine 5'-monophosphate (UMP). This Prochlorococcus marinus subsp. pastoris (strain CCMP1986 / NIES-2087 / MED4) protein is Orotidine 5'-phosphate decarboxylase.